The primary structure comprises 379 residues: Succinyl-diaminopimelate desuccinylase (379 aa).

His-70 is a Zn(2+) binding site. Asp-72 is an active-site residue. Asp-103 is a Zn(2+) binding site. Glu-137 acts as the Proton acceptor in catalysis. Residues Glu-138, Glu-166, and His-352 each coordinate Zn(2+).

The protein belongs to the peptidase M20A family. DapE subfamily. Homodimer. It depends on Zn(2+) as a cofactor. Co(2+) is required as a cofactor.

It carries out the reaction N-succinyl-(2S,6S)-2,6-diaminopimelate + H2O = (2S,6S)-2,6-diaminopimelate + succinate. It participates in amino-acid biosynthesis; L-lysine biosynthesis via DAP pathway; LL-2,6-diaminopimelate from (S)-tetrahydrodipicolinate (succinylase route): step 3/3. Its function is as follows. Catalyzes the hydrolysis of N-succinyl-L,L-diaminopimelic acid (SDAP), forming succinate and LL-2,6-diaminopimelate (DAP), an intermediate involved in the bacterial biosynthesis of lysine and meso-diaminopimelic acid, an essential component of bacterial cell walls. This chain is Succinyl-diaminopimelate desuccinylase, found in Burkholderia vietnamiensis (strain G4 / LMG 22486) (Burkholderia cepacia (strain R1808)).